We begin with the raw amino-acid sequence, 477 residues long: Leukotoxin export protein LtxD (477 aa).

A helical transmembrane segment spans residues I64–A84. The stretch at L206–E287 forms a coiled coil.

It belongs to the membrane fusion protein (MFP) (TC 8.A.1) family. As to quaternary structure, probably part of a complex composed of LtxB, LtxD and TdeA, which forms a single transport channel across the two membranes.

The protein resides in the cell inner membrane. Its function is as follows. Involved in the export of the LtxA leukotoxin. The chain is Leukotoxin export protein LtxD from Aggregatibacter actinomycetemcomitans (Actinobacillus actinomycetemcomitans).